Reading from the N-terminus, the 86-residue chain is Putative membrane protein insertion efficiency factor (86 aa).

Belongs to the UPF0161 family.

It localises to the cell inner membrane. In terms of biological role, could be involved in insertion of integral membrane proteins into the membrane. The chain is Putative membrane protein insertion efficiency factor from Ruegeria sp. (strain TM1040) (Silicibacter sp.).